Reading from the N-terminus, the 274-residue chain is Pantothenate synthetase (274 aa).

Met26 to His33 contributes to the ATP binding site. The active-site Proton donor is His33. Gln57 is a binding site for (R)-pantoate. Gln57 serves as a coordination point for beta-alanine. Gly143–Asp146 contributes to the ATP binding site. Residue Gln149 coordinates (R)-pantoate. ATP contacts are provided by residues Val172 and Leu180–Arg183.

This sequence belongs to the pantothenate synthetase family. Homodimer.

Its subcellular location is the cytoplasm. It carries out the reaction (R)-pantoate + beta-alanine + ATP = (R)-pantothenate + AMP + diphosphate + H(+). It functions in the pathway cofactor biosynthesis; (R)-pantothenate biosynthesis; (R)-pantothenate from (R)-pantoate and beta-alanine: step 1/1. Catalyzes the condensation of pantoate with beta-alanine in an ATP-dependent reaction via a pantoyl-adenylate intermediate. The sequence is that of Pantothenate synthetase from Dechloromonas aromatica (strain RCB).